The sequence spans 93 residues: Small ribosomal subunit protein uS19 (93 aa).

It belongs to the universal ribosomal protein uS19 family.

In terms of biological role, protein S19 forms a complex with S13 that binds strongly to the 16S ribosomal RNA. The chain is Small ribosomal subunit protein uS19 from Mycobacterium marinum (strain ATCC BAA-535 / M).